The following is a 201-amino-acid chain: Large ribosomal subunit protein uL4 (201 aa).

The segment at 43–66 (TRAQKTRSEVSGGGKKPWRQKGTG) is disordered.

It belongs to the universal ribosomal protein uL4 family. Part of the 50S ribosomal subunit.

Functionally, one of the primary rRNA binding proteins, this protein initially binds near the 5'-end of the 23S rRNA. It is important during the early stages of 50S assembly. It makes multiple contacts with different domains of the 23S rRNA in the assembled 50S subunit and ribosome. Its function is as follows. Forms part of the polypeptide exit tunnel. In Tolumonas auensis (strain DSM 9187 / NBRC 110442 / TA 4), this protein is Large ribosomal subunit protein uL4.